A 240-amino-acid polypeptide reads, in one-letter code: Protein shisa-5 (240 aa).

The signal sequence occupies residues 1–28; the sequence is MTAPVPAPRILLPLLLLLLLTPPPGARG. The Extracellular segment spans residues 29-105; that stretch reads EVCMASRGLS…RPGYNDPMSG (77 aa). The helical transmembrane segment at 106-126 threads the bilayer; that stretch reads FGATLAVGLTIFVLSVVTIII. The Cytoplasmic portion of the chain corresponds to 127–240; it reads CFTCSCCCLY…AYMDAPKAAL (114 aa).

Belongs to the shisa family. Interacts with PDCD6; PDCD6 can stabilize SHISA5.

It localises to the endoplasmic reticulum membrane. It is found in the nucleus membrane. Its function is as follows. Can induce apoptosis in a caspase-dependent manner and plays a role in p53/TP53-dependent apoptosis. The chain is Protein shisa-5 (SHISA5) from Homo sapiens (Human).